Consider the following 425-residue polypeptide: MASSNLIKQLQERGLIAQVTDEEALAERLAQGPIALYCGFDPTADSLHLGHLVPLLCLKRFQLSGHKPVALVGGATGLIGDPSFKATERKLNTSETVGEWVEKIRRQVSPFLDFDCGKNSAIAANNYDWFGNMNVLDFLRDIGKHFSVNQMISKEAVKQRLNRDDVGISFTEFSYNLLQGYDFASLNKQHDVELQIGGSDQWGNITSGIDLTRRMNQKQVYGLTVPLITKSDGTKFGKTEGGAIWLDASKTSPYKFYQFWINTADADVYRFLKFFTFMSLENIDALEEEDKNSGKAPRAQYVLAEDVTRMVHGEAGLEAARRITQSLFSGALQDMTQDDFAQLAQDGMPIIELENSADLQQALVSAELVPSRGQARTMISSNAVTINGEKQANPEYIFSASDRLFDRYTLLRRGKKHYCLICWKA.

An L-tyrosine-binding site is contributed by Tyr37. Residues Pro42–His51 carry the 'HIGH' region motif. The L-tyrosine site is built by Tyr175 and Gln179. Positions Lys235 to Thr239 match the 'KMSKS' region motif. Residue Lys238 participates in ATP binding. Positions Ala357–Gly414 constitute an S4 RNA-binding domain.

The protein belongs to the class-I aminoacyl-tRNA synthetase family. TyrS type 1 subfamily. As to quaternary structure, homodimer.

Its subcellular location is the cytoplasm. It catalyses the reaction tRNA(Tyr) + L-tyrosine + ATP = L-tyrosyl-tRNA(Tyr) + AMP + diphosphate + H(+). Functionally, catalyzes the attachment of tyrosine to tRNA(Tyr) in a two-step reaction: tyrosine is first activated by ATP to form Tyr-AMP and then transferred to the acceptor end of tRNA(Tyr). This is Tyrosine--tRNA ligase from Pectobacterium atrosepticum (strain SCRI 1043 / ATCC BAA-672) (Erwinia carotovora subsp. atroseptica).